The following is a 295-amino-acid chain: Light-independent protochlorophyllide reductase iron-sulfur ATP-binding protein (295 aa).

Residues 39–44 (GIGKST) and lysine 68 contribute to the ATP site. Serine 43 lines the Mg(2+) pocket. [4Fe-4S] cluster-binding residues include cysteine 124 and cysteine 158. ATP contacts are provided by residues 209–210 (NR) and 233–235 (PDL).

Belongs to the NifH/BchL/ChlL family. Homodimer. Protochlorophyllide reductase is composed of three subunits; BchL, BchN and BchB. Requires [4Fe-4S] cluster as cofactor.

The enzyme catalyses chlorophyllide a + oxidized 2[4Fe-4S]-[ferredoxin] + 2 ADP + 2 phosphate = protochlorophyllide a + reduced 2[4Fe-4S]-[ferredoxin] + 2 ATP + 2 H2O. It participates in porphyrin-containing compound metabolism; bacteriochlorophyll biosynthesis (light-independent). Its function is as follows. Component of the dark-operative protochlorophyllide reductase (DPOR) that uses Mg-ATP and reduced ferredoxin to reduce ring D of protochlorophyllide (Pchlide) to form chlorophyllide a (Chlide). This reaction is light-independent. The L component serves as a unique electron donor to the NB-component of the complex, and binds Mg-ATP. In Rhodospirillum rubrum (strain ATCC 11170 / ATH 1.1.1 / DSM 467 / LMG 4362 / NCIMB 8255 / S1), this protein is Light-independent protochlorophyllide reductase iron-sulfur ATP-binding protein.